Reading from the N-terminus, the 756-residue chain is Subtilisin-like protease SBT3.9 (756 aa).

A signal peptide spans 1-25; sequence MSKTILFLALFLSIVLNVQISFVVA. Positions 26–108 are cleaved as a propeptide — activation peptide; the sequence is ESKVYVVYLG…VIPNTLYEMT (83 aa). Positions 29–106 constitute an Inhibitor I9 domain; the sequence is VYVVYLGEKE…VQVIPNTLYE (78 aa). Residues 112–603 form the Peptidase S8 domain; the sequence is TWDYLGVSPG…GGLINPEKAV (492 aa). Catalysis depends on aspartate 142, which acts as the Charge relay system. 2 N-linked (GlcNAc...) asparagine glycosylation sites follow: asparagine 175 and asparagine 202. Histidine 218 (charge relay system) is an active-site residue. Residues asparagine 233, asparagine 357, asparagine 395, and asparagine 519 are each glycosylated (N-linked (GlcNAc...) asparagine). In terms of domain architecture, PA spans 386-460; it reads DCEKLSANPN…ELGTDILFYI (75 aa). The active-site Charge relay system is the serine 534.

It belongs to the peptidase S8 family.

Its subcellular location is the secreted. In Arabidopsis thaliana (Mouse-ear cress), this protein is Subtilisin-like protease SBT3.9.